We begin with the raw amino-acid sequence, 156 residues long: ATP synthase subunit b (156 aa).

Residues 12–32 (IAFAIFVWFCVKYVWPPITAA) form a helical membrane-spanning segment.

The protein belongs to the ATPase B chain family. In terms of assembly, F-type ATPases have 2 components, F(1) - the catalytic core - and F(0) - the membrane proton channel. F(1) has five subunits: alpha(3), beta(3), gamma(1), delta(1), epsilon(1). F(0) has three main subunits: a(1), b(2) and c(10-14). The alpha and beta chains form an alternating ring which encloses part of the gamma chain. F(1) is attached to F(0) by a central stalk formed by the gamma and epsilon chains, while a peripheral stalk is formed by the delta and b chains.

The protein resides in the cell inner membrane. Its function is as follows. F(1)F(0) ATP synthase produces ATP from ADP in the presence of a proton or sodium gradient. F-type ATPases consist of two structural domains, F(1) containing the extramembraneous catalytic core and F(0) containing the membrane proton channel, linked together by a central stalk and a peripheral stalk. During catalysis, ATP synthesis in the catalytic domain of F(1) is coupled via a rotary mechanism of the central stalk subunits to proton translocation. Component of the F(0) channel, it forms part of the peripheral stalk, linking F(1) to F(0). The polypeptide is ATP synthase subunit b (Marinobacter nauticus (strain ATCC 700491 / DSM 11845 / VT8) (Marinobacter aquaeolei)).